The primary structure comprises 516 residues: Keratin, type II cuticular Hb2 (516 aa).

Residues 1 to 118 (MSCRNFQLSP…PTVQRVKRDE (118 aa)) are head. The region spanning 118–429 (EKEQIKCLNN…RLLEGEEHRL (312 aa)) is the IF rod domain. The interval 119-153 (KEQIKCLNNRFASFINKVRFLEQKNKLLETKWNFM) is coil 1A. The linker 1 stretch occupies residues 154 to 163 (QQQRSCQSNM). Residues 164–264 (EPLFEGYICA…FEEEIGLLQS (101 aa)) form a coil 1B region. Residues 265 to 281 (QISETSVIVKMDNSREL) form a linker 12 region. The interval 282–425 (DVDGIVAEIK…ATYRRLLEGE (144 aa)) is coil 2. Residues 426 to 516 (EHRLCEGIGP…VGVGSNSCSR (91 aa)) form a tail region.

Belongs to the intermediate filament family. In terms of assembly, heterotetramer of two type I and two type II keratins.

This chain is Keratin, type II cuticular Hb2 (Krt82), found in Mus musculus (Mouse).